The following is a 201-amino-acid chain: Lipopolysaccharide core heptose(II)-phosphate phosphatase (201 aa).

The signal sequence occupies residues 1–35 (MLAFTLRFIKNKRYFAILAGALVIIAGLTSQHAWS).

This sequence belongs to the phosphoglycerate mutase family. Ais subfamily.

Its subcellular location is the periplasm. It participates in bacterial outer membrane biogenesis; lipopolysaccharide metabolism. Functionally, catalyzes the dephosphorylation of heptose(II) of the outer membrane lipopolysaccharide core. The chain is Lipopolysaccharide core heptose(II)-phosphate phosphatase from Salmonella enteritidis PT4 (strain P125109).